We begin with the raw amino-acid sequence, 349 residues long: DNA polymerase IV (349 aa).

Residues 7–188 (IIHIDMDYFF…LPVKKLFGVG (182 aa)) form the UmuC domain. Positions 11 and 106 each coordinate Mg(2+). The active site involves glutamate 107.

This sequence belongs to the DNA polymerase type-Y family. Monomer. It depends on Mg(2+) as a cofactor.

The protein localises to the cytoplasm. The enzyme catalyses DNA(n) + a 2'-deoxyribonucleoside 5'-triphosphate = DNA(n+1) + diphosphate. Poorly processive, error-prone DNA polymerase involved in untargeted mutagenesis. Copies undamaged DNA at stalled replication forks, which arise in vivo from mismatched or misaligned primer ends. These misaligned primers can be extended by PolIV. Exhibits no 3'-5' exonuclease (proofreading) activity. May be involved in translesional synthesis, in conjunction with the beta clamp from PolIII. In Francisella tularensis subsp. holarctica (strain FTNF002-00 / FTA), this protein is DNA polymerase IV.